Reading from the N-terminus, the 255-residue chain is NADPH-dependent FMN reductase ArsH (255 aa).

An FMN-binding site is contributed by 43–50 (SLRARSFS).

The protein belongs to the ArsH family. In terms of assembly, homotetramer. It depends on FMN as a cofactor.

In terms of biological role, has NADPH-dependent FMN reductase activity and very low azoreductase activity. No activity with NADH. The chain is NADPH-dependent FMN reductase ArsH from Shigella flexneri.